We begin with the raw amino-acid sequence, 72 residues long: Cell division protein ZapB (72 aa).

The stretch at 1 to 72 (MSSEILDQLE…RSLLGQIDNV (72 aa)) forms a coiled coil.

Belongs to the ZapB family. As to quaternary structure, homodimer. The ends of the coiled-coil dimer bind to each other, forming polymers. Interacts with FtsZ.

Its subcellular location is the cytoplasm. Its function is as follows. Non-essential, abundant cell division factor that is required for proper Z-ring formation. It is recruited early to the divisome by direct interaction with FtsZ, stimulating Z-ring assembly and thereby promoting cell division earlier in the cell cycle. Its recruitment to the Z-ring requires functional FtsA or ZipA. This Actinobacillus succinogenes (strain ATCC 55618 / DSM 22257 / CCUG 43843 / 130Z) protein is Cell division protein ZapB.